Reading from the N-terminus, the 637-residue chain is tRNA 5-methylaminomethyl-2-thiouridine biosynthesis bifunctional protein MnmC (637 aa).

A tRNA (mnm(5)s(2)U34)-methyltransferase region spans residues 1-231; sequence MPIDPARLAF…KRQMCRGRHR (231 aa). The tract at residues 250–637 is FAD-dependent cmnm(5)s(2)U34 oxidoreductase; it reads IGAGLAGSST…RPARGMTREG (388 aa).

It in the N-terminal section; belongs to the methyltransferase superfamily. tRNA (mnm(5)s(2)U34)-methyltransferase family. In the C-terminal section; belongs to the DAO family. FAD is required as a cofactor.

It localises to the cytoplasm. The catalysed reaction is 5-aminomethyl-2-thiouridine(34) in tRNA + S-adenosyl-L-methionine = 5-methylaminomethyl-2-thiouridine(34) in tRNA + S-adenosyl-L-homocysteine + H(+). Functionally, catalyzes the last two steps in the biosynthesis of 5-methylaminomethyl-2-thiouridine (mnm(5)s(2)U) at the wobble position (U34) in tRNA. Catalyzes the FAD-dependent demodification of cmnm(5)s(2)U34 to nm(5)s(2)U34, followed by the transfer of a methyl group from S-adenosyl-L-methionine to nm(5)s(2)U34, to form mnm(5)s(2)U34. The sequence is that of tRNA 5-methylaminomethyl-2-thiouridine biosynthesis bifunctional protein MnmC from Aromatoleum aromaticum (strain DSM 19018 / LMG 30748 / EbN1) (Azoarcus sp. (strain EbN1)).